Consider the following 701-residue polypeptide: Long chain acyl-CoA synthetase 6, peroxisomal (701 aa).

The propeptide at 1 to 38 (MDSSSSSSSAAARRRINAIHSHLVTSSRSSPLLRSNPT) is removed in mature form. Residues 15–23 (RINAIHSHL) carry the Microbody targeting signal motif. 266–277 (ICYTSGTTGTPK) lines the ATP pocket. A fatty acid-binding region spans residues 526-550 (DGWLHTGDIGLWLPGGRLKIIDRKK).

It belongs to the ATP-dependent AMP-binding enzyme family. Mg(2+) serves as cofactor. As to expression, expressed in roots, stems, leaves flowers and germinating seedling. Preferentially expressed in seeds and senescent leaves.

The protein resides in the peroxisome. It is found in the glyoxysome membrane. It catalyses the reaction a long-chain fatty acid + ATP + CoA = a long-chain fatty acyl-CoA + AMP + diphosphate. The catalysed reaction is tetradecanoate + ATP + CoA = tetradecanoyl-CoA + AMP + diphosphate. The enzyme catalyses hexadecanoate + ATP + CoA = hexadecanoyl-CoA + AMP + diphosphate. It carries out the reaction (9Z)-octadecenoate + ATP + CoA = (9Z)-octadecenoyl-CoA + AMP + diphosphate. It catalyses the reaction (9Z,12Z)-octadecadienoate + ATP + CoA = (9Z,12Z)-octadecadienoyl-CoA + AMP + diphosphate. The catalysed reaction is (9Z,12Z,15Z)-octadecatrienoate + ATP + CoA = (9Z,12Z,15Z)-octadecatrienoyl-CoA + AMP + diphosphate. It participates in lipid metabolism; fatty acid metabolism. Functionally, activation of long-chain fatty acids for both synthesis of cellular lipids, and degradation via beta-oxidation. Preferentially uses palmitate, palmitoleate, oleate, linoleate and eicosenoate as substrates. Can use myristate and linolenate as substrates. May play a regulatory role both in fatty acid import into glyoxysomes and in fatty acid beta-oxidation. Functions redundantly with LACS7 in lipid mobilization for beta-oxidation during seed germination, which is essential for postgerminative growth and seedling establishment. The chain is Long chain acyl-CoA synthetase 6, peroxisomal from Arabidopsis thaliana (Mouse-ear cress).